Here is a 139-residue protein sequence, read N- to C-terminus: Putative pre-16S rRNA nuclease (139 aa).

This sequence belongs to the YqgF nuclease family.

It localises to the cytoplasm. Its function is as follows. Could be a nuclease involved in processing of the 5'-end of pre-16S rRNA. The sequence is that of Putative pre-16S rRNA nuclease from Streptococcus equi subsp. zooepidemicus (strain H70).